The following is a 257-amino-acid chain: S-methyl-5'-thioadenosine phosphorylase (257 aa).

Phosphate-binding positions include Ser10 and Arg50–His51. Met180 lines the substrate pocket. Thr181 is a binding site for phosphate. Substrate is bound at residue Asp204–Asp206.

This sequence belongs to the PNP/MTAP phosphorylase family. MTAP subfamily. Homohexamer. Dimer of a homotrimer.

It carries out the reaction S-methyl-5'-thioadenosine + phosphate = 5-(methylsulfanyl)-alpha-D-ribose 1-phosphate + adenine. It functions in the pathway amino-acid biosynthesis; L-methionine biosynthesis via salvage pathway; S-methyl-5-thio-alpha-D-ribose 1-phosphate from S-methyl-5'-thioadenosine (phosphorylase route): step 1/1. Catalyzes the reversible phosphorylation of S-methyl-5'-thioadenosine (MTA) to adenine and 5-methylthioribose-1-phosphate. Involved in the breakdown of MTA, a major by-product of polyamine biosynthesis. Responsible for the first step in the methionine salvage pathway after MTA has been generated from S-adenosylmethionine. Has broad substrate specificity with 6-aminopurine nucleosides as preferred substrates. The protein is S-methyl-5'-thioadenosine phosphorylase of Pyrococcus horikoshii (strain ATCC 700860 / DSM 12428 / JCM 9974 / NBRC 100139 / OT-3).